Here is a 1082-residue protein sequence, read N- to C-terminus: Integrator complex subunit 3 homolog (1082 aa).

3 disordered regions span residues 483-563 (PGPP…VSDD), 923-945 (YPSNSPNKRKRPSKSAQQNTAPT), and 1005-1082 (DETS…SDSD). Low complexity-rich tracts occupy residues 517 to 528 (PAAKAASTAASA) and 542 to 555 (TKPATTTTTTTTTT). Polar residues predominate over residues 936-945 (KSAQQNTAPT). Low complexity-rich tracts occupy residues 1008–1018 (STTVGRRGTSS) and 1033–1056 (EKAAAAAAAAHANNSKKAAEASAK).

Belongs to the Integrator subunit 3 family. In terms of assembly, belongs to the multiprotein complex Integrator. The core complex associates with protein phosphatase 2A subunits, to form the Integrator-PP2A (INTAC) complex.

It localises to the nucleus. The protein localises to the cytoplasm. Component of the integrator complex, a multiprotein complex that terminates RNA polymerase II (Pol II) transcription in the promoter-proximal region of genes. The integrator complex provides a quality checkpoint during transcription elongation by driving premature transcription termination of transcripts that are unfavorably configured for transcriptional elongation: the complex terminates transcription by (1) catalyzing dephosphorylation of the C-terminal domain (CTD) of Pol II subunit Polr2A/Rbp1 and Spt5, and (2) degrading the exiting nascent RNA transcript via endonuclease activity. The integrator complex is also involved in the 3'-end processing of the U7 snRNA, and also the spliceosomal snRNAs U1, U2, U4 and U5. This Anopheles gambiae (African malaria mosquito) protein is Integrator complex subunit 3 homolog.